The following is a 324-amino-acid chain: Glyoxylate/hydroxypyruvate reductase B (324 aa).

Active-site residues include R237 and E266. H285 serves as the catalytic Proton donor.

This sequence belongs to the D-isomer specific 2-hydroxyacid dehydrogenase family. GhrB subfamily. In terms of assembly, homodimer.

Its subcellular location is the cytoplasm. The enzyme catalyses glycolate + NADP(+) = glyoxylate + NADPH + H(+). It catalyses the reaction (R)-glycerate + NAD(+) = 3-hydroxypyruvate + NADH + H(+). The catalysed reaction is (R)-glycerate + NADP(+) = 3-hydroxypyruvate + NADPH + H(+). Catalyzes the NADPH-dependent reduction of glyoxylate and hydroxypyruvate into glycolate and glycerate, respectively. The polypeptide is Glyoxylate/hydroxypyruvate reductase B (Salmonella heidelberg (strain SL476)).